Here is a 105-residue protein sequence, read N- to C-terminus: MRVVKKKLLRIFTSEDESFEGKPFYKYLLERAKERGLEGATVFRAIAGYGKTKEIRKHKLFQLRSSLPVVVEIIDEEEKIKRFLEEIKGKHNGLITLEDVEVIYL.

It belongs to the UPF0166 family.

The sequence is that of UPF0166 protein aq_450 from Aquifex aeolicus (strain VF5).